A 350-amino-acid chain; its full sequence is fMet-Leu-Phe receptor (350 aa).

Residues 1 to 27 are Extracellular-facing; that stretch reads METNSSLPTNISGGTPAVSAGYLFLDI. Asparagine 4 and asparagine 10 each carry an N-linked (GlcNAc...) asparagine glycan. The chain crosses the membrane as a helical span at residues 28–50; that stretch reads ITYLVFAVTFVLGVLGNGLVIWV. Topologically, residues 51–61 are cytoplasmic; the sequence is AGFRMTHTVTT. The chain crosses the membrane as a helical span at residues 62-83; that stretch reads ISYLNLAVADFCFTSTLPFFMV. Topologically, residues 84 to 100 are extracellular; sequence RKAMGGHWPFGWFLCKF. An intrachain disulfide couples cysteine 98 to cysteine 176. The helical transmembrane segment at 101–121 threads the bilayer; that stretch reads VFTIVDINLFGSVFLIALIAL. The Cytoplasmic segment spans residues 122–140; it reads DRCVCVLHPVWTQNHRTVS. Residues 141–162 form a helical membrane-spanning segment; the sequence is LAKKVIIGPWVMALLLTLPVII. Over 163–205 the chain is Extracellular; it reads RVTTVPGKTGTVACTFNFSPWTNDPKERINVAVAMLTVRGIIR. Residues 206–226 form a helical membrane-spanning segment; the sequence is FIIGFSAPMSIVAVSYGLIAT. The Cytoplasmic segment spans residues 227–242; it reads KIHKQGLIKSSRPLRV. The chain crosses the membrane as a helical span at residues 243-266; the sequence is LSFVAAAFFLCWSPYQVVALIATV. The Extracellular portion of the chain corresponds to 267-285; that stretch reads RIRELLQGMYKEIGIAVDV. Residues 286 to 305 form a helical membrane-spanning segment; that stretch reads TSALAFFNSCLNPMLYVFMG. Topologically, residues 306–350 are cytoplasmic; the sequence is QDFRERLIHALPASLERALTEDSTQTSDTATNSTLPSAEVELQAK. The tract at residues 325–350 is disordered; the sequence is TEDSTQTSDTATNSTLPSAEVELQAK. Over residues 326 to 341 the composition is skewed to polar residues; it reads EDSTQTSDTATNSTLP. At serine 328 the chain carries Phosphoserine. Residues threonine 329 and threonine 331 each carry the phosphothreonine modification. At serine 332 the chain carries Phosphoserine. Residues threonine 334 and threonine 336 each carry the phosphothreonine modification. Serine 338 is subject to Phosphoserine. Residue threonine 339 is modified to Phosphothreonine.

The protein belongs to the G-protein coupled receptor 1 family. In terms of assembly, interacts with S.aureus chemotaxis inhibitory protein (CHIPS); the interaction blocks the receptor and may thus inhibit the immune response. Post-translationally, phosphorylated; which is necessary for desensitization. Neutrophils.

Its subcellular location is the cell membrane. Functionally, high affinity receptor for N-formyl-methionyl peptides (fMLP), which are powerful neutrophil chemotactic factors. Binding of fMLP to the receptor stimulates intracellular calcium mobilization and superoxide anion release. This response is mediated via a G-protein that activates a phosphatidylinositol-calcium second messenger system. Receptor for TAFA4, mediates its effects on chemoattracting macrophages, promoting phagocytosis and increasing ROS release. Receptor for cathepsin CTSG, leading to increased phagocyte chemotaxis. This chain is fMet-Leu-Phe receptor (FPR1), found in Homo sapiens (Human).